A 178-amino-acid chain; its full sequence is Photosystem II extrinsic protein V (178 aa).

The N-terminal stretch at 1–38 is a signal peptide; that stretch reads MFSKFFSLQKAFAAARRRLLILILVLGMAGYAWGPALA. Residues cysteine 71, cysteine 74, histidine 75, and histidine 126 each coordinate heme c.

It belongs to the cytochrome c family. PsbV subfamily. PSII is composed of 1 copy each of membrane proteins PsbA, PsbB, PsbC, PsbD, PsbE, PsbF, PsbH, PsbI, PsbJ, PsbK, PsbL, PsbM, PsbT, PsbX, PsbY, PsbZ, Psb30/Ycf12, peripheral proteins PsbO, CyanoQ (PsbQ), PsbU, PsbV and a large number of cofactors. It forms dimeric complexes. The cofactor is heme c.

The protein resides in the cellular thylakoid membrane. Its function is as follows. One of the extrinsic, lumenal subunits of photosystem II (PSII). PSII is a light-driven water plastoquinone oxidoreductase, using light energy to abstract electrons from H(2)O, generating a proton gradient subsequently used for ATP formation. The extrinsic proteins stabilize the structure of photosystem II oxygen-evolving complex (OEC), the ion environment of oxygen evolution and protect the OEC against heat-induced inactivation. Low-potential cytochrome c that plays a role in the OEC of PSII. This chain is Photosystem II extrinsic protein V, found in Synechococcus sp. (strain JA-3-3Ab) (Cyanobacteria bacterium Yellowstone A-Prime).